The sequence spans 342 residues: Anthranilate phosphoribosyltransferase (342 aa).

5-phospho-alpha-D-ribose 1-diphosphate is bound by residues Gly83, 86 to 87, Thr91, 93 to 96, 111 to 119, and Ser123; these read GD, NVST, and KHGNRSVSG. An anthranilate-binding site is contributed by Gly83. Residue Ser95 participates in Mg(2+) binding. Anthranilate is bound at residue Asn114. Arg169 lines the anthranilate pocket. The Mg(2+) site is built by Asp228 and Glu229.

It belongs to the anthranilate phosphoribosyltransferase family. In terms of assembly, homodimer. It depends on Mg(2+) as a cofactor.

The enzyme catalyses N-(5-phospho-beta-D-ribosyl)anthranilate + diphosphate = 5-phospho-alpha-D-ribose 1-diphosphate + anthranilate. It participates in amino-acid biosynthesis; L-tryptophan biosynthesis; L-tryptophan from chorismate: step 2/5. In terms of biological role, catalyzes the transfer of the phosphoribosyl group of 5-phosphorylribose-1-pyrophosphate (PRPP) to anthranilate to yield N-(5'-phosphoribosyl)-anthranilate (PRA). The sequence is that of Anthranilate phosphoribosyltransferase from Halorhodospira halophila (strain DSM 244 / SL1) (Ectothiorhodospira halophila (strain DSM 244 / SL1)).